A 363-amino-acid polypeptide reads, in one-letter code: G-protein coupled receptor 4 (363 aa).

Residues 1–8 (MGNGTWEG) are Extracellular-facing. Residue N3 is glycosylated (N-linked (GlcNAc...) asparagine). Residues 9 to 45 (CHVDSRVDHLFPPSLYIFVIGVGLPTNCLALWAAYRQ) form a helical membrane-spanning segment. Cystine bridges form between C9–C258 and C90–C168. The Cytoplasmic segment spans residues 46–49 (VRQR). Residues 50–80 (NELGVYLMNLSIADLLYICTLPLWVDYFLHH) traverse the membrane as a helical segment. The Extracellular segment spans residues 81–85 (DNWIH). A helical transmembrane segment spans residues 86–121 (GPGSCKLFGFIFYTNIYISIAFLCCISVDRYLAVAH). At 122 to 129 (PLRFARLR) the chain is on the cytoplasmic side. The helical transmembrane segment at 130-156 (RVKTAVAVSSVVWATELGANSVPLFHD) threads the bilayer. Residues 157 to 172 (ELFRDRYNHTFCFEKF) lie on the Extracellular side of the membrane. An extracellular loop 2 (ECL2) region spans residues 157 to 172 (ELFRDRYNHTFCFEKF). N164 carries N-linked (GlcNAc...) asparagine glycosylation. A helical transmembrane segment spans residues 173–210 (PMEGWVAWMNLYRVFVGFLFPWALMLLSYRGILRAVRG). Over 211–214 (SVST) the chain is Cytoplasmic. Residues 215-250 (ERQEKAKIKRLALSLIAIVLVCFAPYHVLLLSRSAV) form a helical membrane-spanning segment. The Extracellular portion of the chain corresponds to 251-260 (YLGHPWDCGF). Residues 261–289 (EERVFSAYHSSLAFTSLNCVADPILYCLV) traverse the membrane as a helical segment. Residues 290-363 (NEGARSDVAK…QLKMLPPPAP (74 aa)) lie on the Cytoplasmic side of the membrane. The tract at residues 344–363 (ASPPSQGDQVQLKMLPPPAP) is disordered.

Belongs to the G-protein coupled receptor 1 family.

The protein localises to the cell membrane. Activated by a network of residues that connects an extracellular-facing cavity to Glu-145, a conserved charged residue buried in the transmembrane core of the receptor. Protonation likely drives conformational changes in extracellular loop 2 (ECL2), which stabilizes movement of transmembrane 3 (TM3) and a series of rearrangements that connect the extracellular-facing cavity to Glu-145, a residue only conserved in proton-sensing G-protein coupled receptors. Functionally, proton-sensing G-protein coupled receptor activated by extracellular pH, which is required to monitor pH changes and generate adaptive reactions. Activated by an optimal pH of 6.8-7.2. Ligand binding causes a conformation change that triggers signaling via guanine nucleotide-binding proteins (G proteins) and modulates the activity of downstream effectors, such as adenylate cyclase. GPR4 is mainly coupled to G(s) G proteins and mediates activation of adenylate cyclase activity. May also couple with G(q) and G(12)/G(13) G proteins. Acts as a key regulator of respiratory sensitivity to CO2/H(+) in brain retrotrapezoid nucleus neurons: acts by mediating detection of protons generated by the formation of carbonic acid in the blood, an important mechanism to impulse to breathe. Also acts as a regulator of acid secretion in the kidney collecting duct by maintaining acid-base homeostasis in the kidney. Acidosis-induced GPR4 activation increases paracellular gap formation and permeability of vascular endothelial cells, possibly through the G(12)/G(13)/Rho GTPase signaling pathway. The protein is G-protein coupled receptor 4 (GPR4) of Sus scrofa (Pig).